We begin with the raw amino-acid sequence, 232 residues long: Histone H1B (232 aa).

The segment covering 1–18 (MSDPAVEVTPAVPVASPA) has biased composition (low complexity). 2 disordered regions span residues 1–44 (MSDP…PPVS) and 99–232 (QTKG…AKKA). The H15 domain maps to 39-113 (THPPVSEMVV…GASGSFKLPA (75 aa)). Composition is skewed to basic residues over residues 132 to 141 (KPKKAAAKPK), 147 to 173 (KVKK…KTTK), 181 to 197 (AAKK…KPKA), 205 to 214 (KRAAAPKAKK), and 222 to 232 (KAAKKPAAKKA).

Belongs to the histone H1/H5 family.

It localises to the nucleus. The protein resides in the chromosome. In terms of biological role, histones H1 are necessary for the condensation of nucleosome chains into higher-order structures. This is Histone H1B from Chironomus tentans (Midge).